Consider the following 444-residue polypeptide: tRNA-2-methylthio-N(6)-dimethylallyladenosine synthase (444 aa).

Residues 7-121 (KTFHVKSFGC…LPELIARAER (115 aa)) enclose the MTTase N-terminal domain. [4Fe-4S] cluster-binding residues include C16, C52, C84, C158, C162, and C165. One can recognise a Radical SAM core domain in the interval 144–376 (GNQRPTAFLT…QALLNEQQQA (233 aa)). Positions 379–441 (EATVGRTTRL…PNSLGAEPLM (63 aa)) constitute a TRAM domain.

It belongs to the methylthiotransferase family. MiaB subfamily. As to quaternary structure, monomer. Requires [4Fe-4S] cluster as cofactor.

It is found in the cytoplasm. The catalysed reaction is N(6)-dimethylallyladenosine(37) in tRNA + (sulfur carrier)-SH + AH2 + 2 S-adenosyl-L-methionine = 2-methylsulfanyl-N(6)-dimethylallyladenosine(37) in tRNA + (sulfur carrier)-H + 5'-deoxyadenosine + L-methionine + A + S-adenosyl-L-homocysteine + 2 H(+). Its function is as follows. Catalyzes the methylthiolation of N6-(dimethylallyl)adenosine (i(6)A), leading to the formation of 2-methylthio-N6-(dimethylallyl)adenosine (ms(2)i(6)A) at position 37 in tRNAs that read codons beginning with uridine. This Sphingopyxis alaskensis (strain DSM 13593 / LMG 18877 / RB2256) (Sphingomonas alaskensis) protein is tRNA-2-methylthio-N(6)-dimethylallyladenosine synthase.